The primary structure comprises 215 residues: N-(5'-phosphoribosyl)anthranilate isomerase (215 aa).

This sequence belongs to the TrpF family.

The catalysed reaction is N-(5-phospho-beta-D-ribosyl)anthranilate = 1-(2-carboxyphenylamino)-1-deoxy-D-ribulose 5-phosphate. The protein operates within amino-acid biosynthesis; L-tryptophan biosynthesis; L-tryptophan from chorismate: step 3/5. This is N-(5'-phosphoribosyl)anthranilate isomerase from Ruegeria sp. (strain TM1040) (Silicibacter sp.).